A 1857-amino-acid polypeptide reads, in one-letter code: U3 small nucleolar RNA-associated protein 10 (1857 aa).

A helical transmembrane segment spans residues 267 to 287 (LTAYSIISVLSSLVPLSADLV). Residues 1817 to 1855 (LIPYIAELLEDDDEEVELEVRNGLVRVIENVLGEPLDRY) form an HEAT repeat.

It belongs to the HEATR1/UTP10 family. As to quaternary structure, component of the ribosomal small subunit (SSU) processome.

It localises to the nucleus. It is found in the nucleolus. The protein resides in the membrane. Functionally, involved in nucleolar processing of pre-18S ribosomal RNA. Involved in ribosome biosynthesis. This Debaryomyces hansenii (strain ATCC 36239 / CBS 767 / BCRC 21394 / JCM 1990 / NBRC 0083 / IGC 2968) (Yeast) protein is U3 small nucleolar RNA-associated protein 10.